Consider the following 340-residue polypeptide: DNA-directed RNA polymerase subunit alpha (340 aa).

The alpha N-terminal domain (alpha-NTD) stretch occupies residues 1–226 (MLIAQRPSLT…ELFGLARELN (226 aa)). Positions 243-340 (LAADLALPIE…DAGFVETEQY (98 aa)) are alpha C-terminal domain (alpha-CTD).

It belongs to the RNA polymerase alpha chain family. In terms of assembly, homodimer. The RNAP catalytic core consists of 2 alpha, 1 beta, 1 beta' and 1 omega subunit. When a sigma factor is associated with the core the holoenzyme is formed, which can initiate transcription.

The enzyme catalyses RNA(n) + a ribonucleoside 5'-triphosphate = RNA(n+1) + diphosphate. Its function is as follows. DNA-dependent RNA polymerase catalyzes the transcription of DNA into RNA using the four ribonucleoside triphosphates as substrates. This Streptomyces avermitilis (strain ATCC 31267 / DSM 46492 / JCM 5070 / NBRC 14893 / NCIMB 12804 / NRRL 8165 / MA-4680) protein is DNA-directed RNA polymerase subunit alpha.